Here is a 202-residue protein sequence, read N- to C-terminus: MPKVIGLTGGIATGKSTVSELLTAFGFKVVDADIAARKAVAKGTKGLEQVRAAFGDSAITEEGEMDRKYVGEIVFNHPEKRLELNDIVHPIVREIMEEEKQSYLNQGYDVIMDIPLLFENELQNTVDEVWLVYTSESIQIERLMERNQLSLEDAKARVYSQISIDKKSRMADHVIDNLGDKLELKQNLEQLLTDKGFINKER.

Residues Val4–Arg202 form the DPCK domain. Ala12 to Thr17 serves as a coordination point for ATP.

This sequence belongs to the CoaE family.

It is found in the cytoplasm. The catalysed reaction is 3'-dephospho-CoA + ATP = ADP + CoA + H(+). Its pathway is cofactor biosynthesis; coenzyme A biosynthesis; CoA from (R)-pantothenate: step 5/5. Catalyzes the phosphorylation of the 3'-hydroxyl group of dephosphocoenzyme A to form coenzyme A. This is Dephospho-CoA kinase from Staphylococcus haemolyticus (strain JCSC1435).